The chain runs to 327 residues: Acetyl-coenzyme A carboxylase carboxyl transferase subunit alpha (327 aa).

Residues 46 to 299 enclose the CoA carboxyltransferase C-terminal domain; sequence LEARAIQLRR…RQVLLRHLKD (254 aa).

This sequence belongs to the AccA family. As to quaternary structure, acetyl-CoA carboxylase is a heterohexamer composed of biotin carboxyl carrier protein (AccB), biotin carboxylase (AccC) and two subunits each of ACCase subunit alpha (AccA) and ACCase subunit beta (AccD).

Its subcellular location is the cytoplasm. It catalyses the reaction N(6)-carboxybiotinyl-L-lysyl-[protein] + acetyl-CoA = N(6)-biotinyl-L-lysyl-[protein] + malonyl-CoA. It functions in the pathway lipid metabolism; malonyl-CoA biosynthesis; malonyl-CoA from acetyl-CoA: step 1/1. Functionally, component of the acetyl coenzyme A carboxylase (ACC) complex. First, biotin carboxylase catalyzes the carboxylation of biotin on its carrier protein (BCCP) and then the CO(2) group is transferred by the carboxyltransferase to acetyl-CoA to form malonyl-CoA. The sequence is that of Acetyl-coenzyme A carboxylase carboxyl transferase subunit alpha from Synechococcus elongatus (strain ATCC 33912 / PCC 7942 / FACHB-805) (Anacystis nidulans R2).